The sequence spans 359 residues: Phosphate acyltransferase (359 aa).

Belongs to the PlsX family. As to quaternary structure, homodimer. Probably interacts with PlsY.

It localises to the cytoplasm. It catalyses the reaction a fatty acyl-[ACP] + phosphate = an acyl phosphate + holo-[ACP]. It participates in lipid metabolism; phospholipid metabolism. Its function is as follows. Catalyzes the reversible formation of acyl-phosphate (acyl-PO(4)) from acyl-[acyl-carrier-protein] (acyl-ACP). This enzyme utilizes acyl-ACP as fatty acyl donor, but not acyl-CoA. The polypeptide is Phosphate acyltransferase (Salmonella heidelberg (strain SL476)).